The primary structure comprises 513 residues: E3 ubiquitin-protein ligase XBAT33 (513 aa).

5 ANK repeats span residues 44-73 (GLNSPLHFAAAKGHNEIVGLLLENGADVNS), 77-106 (CGQTALMQACRYGHWEVVQTLLLFRCNVTR), 111-140 (AGRTALHFAAVNGHARCIRLVLADFLPSDK), 171-200 (GGITALHMAALNGLFDCVQLLLDLEANVSA), and 214-244 (AGSTPLHYAACGGNLKCCQILLARGARKMTL). An RING-type zinc finger spans residues 312-362 (CAVCLERTCTVAAEGCEHQLCVRCALYLCSSSNVPSVTVGPPGSIPCPLCR). 2 disordered regions span residues 397–417 (DTTDQSSPTCPPTEQRSSKTR) and 455–483 (HGTERHSEEHVESSPSRTTTEQEKIEEGQ). Composition is skewed to basic and acidic residues over residues 455–466 (HGTERHSEEHVE) and 474–483 (TEQEKIEEGQ).

It catalyses the reaction S-ubiquitinyl-[E2 ubiquitin-conjugating enzyme]-L-cysteine + [acceptor protein]-L-lysine = [E2 ubiquitin-conjugating enzyme]-L-cysteine + N(6)-ubiquitinyl-[acceptor protein]-L-lysine.. The protein operates within protein modification; protein ubiquitination. Functionally, possesses E3 ubiquitin-protein ligase activity when associated with the E2 enzyme UBC8 in vitro. The chain is E3 ubiquitin-protein ligase XBAT33 (XBAT33) from Arabidopsis thaliana (Mouse-ear cress).